Here is a 201-residue protein sequence, read N- to C-terminus: Recombination protein RecR (201 aa).

The C4-type zinc-finger motif lies at 57 to 72 (CADCRTFTEQDICTIC). A Toprim domain is found at 81 to 176 (GQICVVESPA…VASRIAHGVP (96 aa)).

The protein belongs to the RecR family.

May play a role in DNA repair. It seems to be involved in an RecBC-independent recombinational process of DNA repair. It may act with RecF and RecO. This Serratia proteamaculans (strain 568) protein is Recombination protein RecR.